The primary structure comprises 346 residues: Upstream stimulatory factor 2 (346 aa).

2 disordered regions span residues 1 to 44 and 215 to 244; these read MDML…PGAE and APRT…NEVE. The span at 11-20 shows a compositional bias: low complexity; it reads ASSATAAAAA. The span at 226-244 shows a compositional bias: basic and acidic residues; that stretch reads DGTRTPRDERRRAQHNEVE. Residues 235-290 form the bHLH domain; sequence RRRAQHNEVERRRRDKINNWIVQLSKIIPDCHADNSKTGASKGGILSKACDYIREL. The segment at 307–328 is leucine-zipper; that stretch reads LQMDNELLRQQIEELKNENALL.

As to quaternary structure, efficient DNA binding requires dimerization with another bHLH protein. Binds DNA as a homodimer or a heterodimer (USF1/USF2). Interacts with MAF.

Its subcellular location is the nucleus. Transcription factor that binds to a symmetrical DNA sequence (E-boxes) (5'-CACGTG-3') that is found in a variety of viral and cellular promoters. The polypeptide is Upstream stimulatory factor 2 (Usf2) (Mus musculus (Mouse)).